The following is a 204-amino-acid chain: Large ribosomal subunit protein bL25 (204 aa).

The segment at 1-23 (MSETLHLSAETRDRAGKGASRAL) is disordered.

Belongs to the bacterial ribosomal protein bL25 family. CTC subfamily. As to quaternary structure, part of the 50S ribosomal subunit; part of the 5S rRNA/L5/L18/L25 subcomplex. Contacts the 5S rRNA. Binds to the 5S rRNA independently of L5 and L18.

This is one of the proteins that binds to the 5S RNA in the ribosome where it forms part of the central protuberance. The protein is Large ribosomal subunit protein bL25 of Novosphingobium aromaticivorans (strain ATCC 700278 / DSM 12444 / CCUG 56034 / CIP 105152 / NBRC 16084 / F199).